A 1014-amino-acid chain; its full sequence is Chondroitin sulfate ABC exolyase (1014 aa).

Residues 1 to 14 (MLILSFLCPAFLNA) form the signal peptide. Positions 24, 26, 50, 53, and 161 each coordinate Ca(2+). Active-site proton acceptor residues include histidine 345 and histidine 454. Tyrosine 461 serves as the catalytic Proton donor.

The protein belongs to the polysaccharide lyase 8 family. As to quaternary structure, monomer. Ca(2+) is required as a cofactor. The cofactor is Mg(2+).

The protein localises to the periplasm. The catalysed reaction is Exolytic removal of Delta(4)-unsaturated disaccharide residues from the non-reducing ends of both polymeric chondroitin/dermatan sulfates and their oligosaccharide fragments.. Specific activity for chondroitin sulfate substrates increases moderately (2-fold) while an increase of 25-fold is observed for dermatan sulfate as substrate upon addition of Ca(2+) or Mg(2+) ions. Increasing the concentration of Na(+), K(+) or Cs(+) chloride from 0 to 0.1 M, increases the activity against all substrates. Further increases in salt concentration reduces the activity dramatically, with 50% inhibition occurring at 0.15 M and nearly complete inhibition at 0.4 M salt. The addition of 10 mM Ca(2+) or Mg(2+) ions increases the activity against chondroitin 4- and 6-sulfates by 2-3-fold, while the activity against dermatan sulfate increases much more significantly by 50-fold. Addition of Mn(2+) and Zn(2+) reduces activity against chondroitin sulfate substrates, but increases the activity against dermatan sulfate. Increasing the concentration of CaCl(2) with both chondroitin 4- and 6-sulfates from 0 to 0.04 M increases the activity. A further increase reduces activity, with 50% inhibition at 0.065-0.085 M and a complete inhibition of the reaction at 0.2 M. In case of dermatan sulfate, the addition of low concentration of CaCl(2) dramatically increases the activity from the basal level. The maximal activity is reached at 0.01 M CaCl(2). Functionally, broad-specificity glycosaminoglycan lyase, which acts in an exolytic fashion degrading chondroitin sulfates and dermatan sulfate to yield only disaccharide products. Has a preference for chondroitin 4-sulfate over chondroitin 6-sulfate. Has extremely low activity against hyaluronic acid. Is not active against acharan sulfate, heparin or heparan sulfate. The polypeptide is Chondroitin sulfate ABC exolyase (chonabc) (Bacteroides thetaiotaomicron).